A 101-amino-acid polypeptide reads, in one-letter code: Large ribosomal subunit protein eL43 (101 aa).

Positions 40, 43, 59, and 62 each coordinate Zn(2+). The C4-type zinc finger occupies 40-62 (CPSCRSLVRLERIAFGIWRCPKC).

The protein belongs to the eukaryotic ribosomal protein eL43 family. Putative zinc-binding subfamily. In terms of assembly, part of the 50S ribosomal subunit. Zn(2+) is required as a cofactor.

Functionally, binds to the 23S rRNA. The sequence is that of Large ribosomal subunit protein eL43 from Pyrobaculum aerophilum (strain ATCC 51768 / DSM 7523 / JCM 9630 / CIP 104966 / NBRC 100827 / IM2).